A 620-amino-acid polypeptide reads, in one-letter code: Ferric/cupric reductase transmembrane component 7 (620 aa).

Topologically, residues 1–45 (MIEERDLVLSNGIHCIADIHSELYARLKKESQAATPWVYQKQYGK) are extracellular. The chain crosses the membrane as a helical span at residues 46–66 (FVTYFVAVIIFLSLIKKLAFM). The Cytoplasmic segment spans residues 67-107 (YYDSSEEFLPEKKNSPTTPSVFLARIMTKLVAFNRYICYRK). Residues 108-128 (FPTLIFSYLGIPTSVGTFLVV) traverse the membrane as a helical segment. At 129-167 (MATTLYTLLYCFVPHPFYRPCAGFGSPPLSVRAGIMAIS) the chain is on the extracellular side. In terms of domain architecture, Ferric oxidoreductase spans 161–320 (AGIMAISLVP…LAVKGYLRPG (160 aa)). A helical transmembrane segment spans residues 168–188 (LVPFVFSLSGKINVIGWLVGL). Residues 189-194 (SYEKIN) lie on the Cytoplasmic side of the membrane. Residues 195 to 215 (IYHQWASILCLFFSWVHVIPF) traverse the membrane as a helical segment. Residues histidine 197 and histidine 211 each contribute to the heme site. At 216–237 (LRQARHEGGYERMHQRWKASDM) the chain is on the extracellular side. The chain crosses the membrane as a helical span at residues 238–258 (WRSGVPPILFLNLLWLSSLPI). Residues 259–265 (ARRHFYE) are Cytoplasmic-facing. Residues 266-286 (IFLQLHWILAVGFYISLFYHV) traverse the membrane as a helical segment. Positions 271 and 285 each coordinate heme. Residues 287–292 (YPELNS) are Extracellular-facing. Residues 293–313 (HMYLVATIVVWFAQLFYRLAV) form a helical membrane-spanning segment. The Cytoplasmic segment spans residues 314–620 (KGYLRPGRSF…CYLHSESFGY (307 aa)). The 99-residue stretch at 321-419 (RSFMASTIAN…DGPYGGIERD (99 aa)) folds into the FAD-binding FR-type domain. 369-375 (HPFSIFP) lines the FAD pocket. Position 411–414 (411–414 (GPYG)) interacts with NADP(+). The disordered stretch occupies residues 519-543 (SDQSDLAKREKDTEFGQDDTESNST). Residues 523-532 (DLAKREKDTE) are compositionally biased toward basic and acidic residues. 578-579 (CF) serves as a coordination point for NADP(+).

Belongs to the ferric reductase (FRE) family. FAD serves as cofactor.

It localises to the cell membrane. The enzyme catalyses 2 a Fe(II)-siderophore + NADP(+) + H(+) = 2 a Fe(III)-siderophore + NADPH. In terms of biological role, cell surface metalloreductase. May be involved in copper homeostasis. The chain is Ferric/cupric reductase transmembrane component 7 (FRE7) from Saccharomyces cerevisiae (strain ATCC 204508 / S288c) (Baker's yeast).